The primary structure comprises 115 residues: Large ribosomal subunit protein bL19 (115 aa).

It belongs to the bacterial ribosomal protein bL19 family.

Its function is as follows. This protein is located at the 30S-50S ribosomal subunit interface and may play a role in the structure and function of the aminoacyl-tRNA binding site. The protein is Large ribosomal subunit protein bL19 of Aeromonas hydrophila subsp. hydrophila (strain ATCC 7966 / DSM 30187 / BCRC 13018 / CCUG 14551 / JCM 1027 / KCTC 2358 / NCIMB 9240 / NCTC 8049).